The primary structure comprises 126 residues: Large ribosomal subunit protein bL12 (126 aa).

It belongs to the bacterial ribosomal protein bL12 family. Homodimer. Part of the ribosomal stalk of the 50S ribosomal subunit. Forms a multimeric L10(L12)X complex, where L10 forms an elongated spine to which 2 to 4 L12 dimers bind in a sequential fashion. Binds GTP-bound translation factors.

Functionally, forms part of the ribosomal stalk which helps the ribosome interact with GTP-bound translation factors. Is thus essential for accurate translation. The chain is Large ribosomal subunit protein bL12 from Solibacter usitatus (strain Ellin6076).